A 309-amino-acid chain; its full sequence is Ribosomal RNA small subunit methyltransferase H (309 aa).

Residues G33 to H35, D53, F79, D100, and Q107 contribute to the S-adenosyl-L-methionine site.

Belongs to the methyltransferase superfamily. RsmH family.

Its subcellular location is the cytoplasm. The enzyme catalyses cytidine(1402) in 16S rRNA + S-adenosyl-L-methionine = N(4)-methylcytidine(1402) in 16S rRNA + S-adenosyl-L-homocysteine + H(+). Specifically methylates the N4 position of cytidine in position 1402 (C1402) of 16S rRNA. This is Ribosomal RNA small subunit methyltransferase H from Clostridium kluyveri (strain NBRC 12016).